A 450-amino-acid chain; its full sequence is Chromosomal replication initiator protein DnaA (450 aa).

The domain I, interacts with DnaA modulators stretch occupies residues 1–84; that stretch reads MENIHDLWDR…AVKFIIPPNQ (84 aa). Residues 84 to 111 form a domain II region; that stretch reads QADEKLELPSSAKKQRKPYEEANDFPQS. The interval 112 to 328 is domain III, AAA+ region; sequence MLNPKYTFDT…GALIRVVAYS (217 aa). ATP contacts are provided by Gly156, Gly158, Lys159, and Thr160. Residues 329–450 form a domain IV, binds dsDNA region; sequence SLINKEITAD…KEIQEKLKQL (122 aa).

Belongs to the DnaA family. As to quaternary structure, oligomerizes as a right-handed, spiral filament on DNA at oriC.

The protein localises to the cytoplasm. In terms of biological role, plays an essential role in the initiation and regulation of chromosomal replication. ATP-DnaA binds to the origin of replication (oriC) to initiate formation of the DNA replication initiation complex once per cell cycle. Binds the DnaA box (a 9 base pair repeat at the origin) and separates the double-stranded (ds)DNA. Forms a right-handed helical filament on oriC DNA; dsDNA binds to the exterior of the filament while single-stranded (ss)DNA is stabiized in the filament's interior. The ATP-DnaA-oriC complex binds and stabilizes one strand of the AT-rich DNA unwinding element (DUE), permitting loading of DNA polymerase. After initiation quickly degrades to an ADP-DnaA complex that is not apt for DNA replication. Binds acidic phospholipids. The sequence is that of Chromosomal replication initiator protein DnaA from Geobacillus thermodenitrificans (strain NG80-2).